The sequence spans 423 residues: Imidazolonepropionase (423 aa).

Residues H78 and H80 each coordinate Fe(3+). Residues H78 and H80 each contribute to the Zn(2+) site. Residues R87, Y150, and H183 each coordinate 4-imidazolone-5-propanoate. Position 150 (Y150) interacts with N-formimidoyl-L-glutamate. Residue H247 coordinates Fe(3+). H247 provides a ligand contact to Zn(2+). E250 is a binding site for 4-imidazolone-5-propanoate. D322 contacts Fe(3+). Zn(2+) is bound at residue D322. N-formimidoyl-L-glutamate is bound by residues N324 and G326. S327 contacts 4-imidazolone-5-propanoate.

The protein belongs to the metallo-dependent hydrolases superfamily. HutI family. Zn(2+) is required as a cofactor. The cofactor is Fe(3+).

It is found in the cytoplasm. It carries out the reaction 4-imidazolone-5-propanoate + H2O = N-formimidoyl-L-glutamate. The protein operates within amino-acid degradation; L-histidine degradation into L-glutamate; N-formimidoyl-L-glutamate from L-histidine: step 3/3. Functionally, catalyzes the hydrolytic cleavage of the carbon-nitrogen bond in imidazolone-5-propanoate to yield N-formimidoyl-L-glutamate. It is the third step in the universal histidine degradation pathway. This is Imidazolonepropionase from Bacillus anthracis (strain A0248).